Consider the following 137-residue polypeptide: Small ribosomal subunit protein uS9 (137 aa).

Positions 105 to 137 are disordered; it reads LKTEGYLKRDPRAVERKKYGLRKARKAPQYSKR. The span at 109-122 shows a compositional bias: basic and acidic residues; sequence GYLKRDPRAVERKK. Residues 123–137 are compositionally biased toward basic residues; that stretch reads YGLRKARKAPQYSKR.

It belongs to the universal ribosomal protein uS9 family.

In Synechococcus sp. (strain JA-3-3Ab) (Cyanobacteria bacterium Yellowstone A-Prime), this protein is Small ribosomal subunit protein uS9.